The primary structure comprises 196 residues: GTP cyclohydrolase 1 (196 aa).

Cys85, His88, and Cys156 together coordinate Zn(2+).

This sequence belongs to the GTP cyclohydrolase I family. In terms of assembly, toroid-shaped homodecamer, composed of two pentamers of five dimers.

It carries out the reaction GTP + H2O = 7,8-dihydroneopterin 3'-triphosphate + formate + H(+). The protein operates within cofactor biosynthesis; 7,8-dihydroneopterin triphosphate biosynthesis; 7,8-dihydroneopterin triphosphate from GTP: step 1/1. The sequence is that of GTP cyclohydrolase 1 from Bacteroides thetaiotaomicron (strain ATCC 29148 / DSM 2079 / JCM 5827 / CCUG 10774 / NCTC 10582 / VPI-5482 / E50).